An 81-amino-acid chain; its full sequence is Small ribosomal subunit protein bS18 (81 aa).

It belongs to the bacterial ribosomal protein bS18 family. In terms of assembly, part of the 30S ribosomal subunit. Forms a tight heterodimer with protein bS6.

In terms of biological role, binds as a heterodimer with protein bS6 to the central domain of the 16S rRNA, where it helps stabilize the platform of the 30S subunit. This chain is Small ribosomal subunit protein bS18, found in Leptospira borgpetersenii serovar Hardjo-bovis (strain JB197).